A 701-amino-acid polypeptide reads, in one-letter code: Polyribonucleotide nucleotidyltransferase (701 aa).

Mg(2+)-binding residues include aspartate 483 and aspartate 489. In terms of domain architecture, KH spans 550-609 (PRIYTLHIPTDKIRDVIGPGGKVIRGIIEQTGVKIDVEDDGTIHVASADEASANKAIQII). One can recognise an S1 motif domain in the interval 619 to 686 (GKTYLGKVVR…EGNKIKLSRK (68 aa)).

Belongs to the polyribonucleotide nucleotidyltransferase family. The cofactor is Mg(2+).

It is found in the cytoplasm. The catalysed reaction is RNA(n+1) + phosphate = RNA(n) + a ribonucleoside 5'-diphosphate. Its function is as follows. Involved in mRNA degradation. Catalyzes the phosphorolysis of single-stranded polyribonucleotides processively in the 3'- to 5'-direction. The chain is Polyribonucleotide nucleotidyltransferase from Solibacter usitatus (strain Ellin6076).